Reading from the N-terminus, the 1376-residue chain is Spike glycoprotein (1376 aa).

Positions 1–13 (MLFVFILLLPSCL) are cleaved as a signal peptide. The Extracellular portion of the chain corresponds to 14-1317 (GYIGDFRCIQ…GTYEMYVKWP (1304 aa)). The BetaCoV S1-NTD domain occupies 15–296 (YIGDFRCIQT…SYISEIKCKT (282 aa)). Residues 15 to 330 (YIGDFRCIQT…RRVPNLPDCK (316 aa)) are receptor binding site. Intrachain disulfides connect cysteine 21-cysteine 158, cysteine 153-cysteine 187, cysteine 165-cysteine 246, cysteine 284-cysteine 294, and cysteine 329-cysteine 354. Residues asparagine 31, asparagine 60, and asparagine 134 are each glycosylated (N-linked (GlcNAc...) asparagine; by host). An N-linked (GlcNAc...) asparagine; by host glycan is attached at asparagine 192. One can recognise a BetaCoV S1-CTD domain in the interval 327–618 (PDCKIEEWLT…GINSGTTCST (292 aa)). Asparagine 357 is a glycosylation site (N-linked (GlcNAc...) asparagine; by host). Intrachain disulfides connect cysteine 372/cysteine 425 and cysteine 384/cysteine 616. The interval 429–599 (YSLPKNNVTI…HDTCLVNDRC (171 aa)) is important for the neurovirulence. 8 N-linked (GlcNAc...) asparagine; by host glycosylation sites follow: asparagine 435, asparagine 582, asparagine 677, asparagine 709, asparagine 717, asparagine 740, asparagine 789, and asparagine 806. Fusion peptide regions lie at residues 922–943 (SAIEDLLFDKVKLSDVGFVEAY) and 941–961 (EAYNNCTGGQEVRDLLCVQSF). The N-linked (GlcNAc...) asparagine; by host glycan is linked to asparagine 945. Residues cysteine 946 and cysteine 957 are joined by a disulfide bond. The heptad repeat 1 stretch occupies residues 1022 to 1072 (QKMIASAFNNALGAIQEGFDATNSALGKIQSVVNANAEALNNLLNQLSNRF). Residues 1051–1095 (QSVVNANAEALNNLLNQLSNRFGAISASLQEILTRLDAVEAKAQI) adopt a coiled-coil conformation. Residues asparagine 1232, asparagine 1242, asparagine 1261, asparagine 1277, and asparagine 1298 are each glycosylated (N-linked (GlcNAc...) asparagine; by host). The tract at residues 1266-1306 (APDLSLDFEKLNVTFLDLTYEMNRIQDAIKKLNESYINLKE) is heptad repeat 2. A coiled-coil region spans residues 1279–1307 (TFLDLTYEMNRIQDAIKKLNESYINLKEV). Residues 1318 to 1338 (WYVWLLIGLAGVAVCVLLFFI) form a helical membrane-spanning segment. Residues 1339 to 1376 (CCCTGCGSCCFRKCGSCCDEYGGHQDSIVIHNISAHED) lie on the Cytoplasmic side of the membrane. Residues 1372-1376 (SAHED) carry the KxHxx motif.

The protein belongs to the betacoronaviruses spike protein family. Homotrimer; each monomer consists of a S1 and a S2 subunit. The resulting peplomers protrude from the virus surface as spikes. In terms of processing, specific enzymatic cleavages in vivo yield mature proteins. The precursor is processed into S1 and S2 by host cell furin or another cellular protease to yield the mature S1 and S2 proteins. Additionally, a second cleavage leads to the release of a fusion peptide after viral attachment to host cell receptor. The cytoplasmic Cys-rich domain is palmitoylated. Spike glycoprotein is digested within host endosomes.

Its subcellular location is the virion membrane. It is found in the host endoplasmic reticulum-Golgi intermediate compartment membrane. It localises to the host cell membrane. In terms of biological role, attaches the virion to the cell membrane by interacting with host receptor, initiating the infection. Its function is as follows. Mediates fusion of the virion and cellular membranes by acting as a class I viral fusion protein. Under the current model, the protein has at least three conformational states: pre-fusion native state, pre-hairpin intermediate state, and post-fusion hairpin state. During viral and target cell membrane fusion, the coiled coil regions (heptad repeats) assume a trimer-of-hairpins structure, positioning the fusion peptide in close proximity to the C-terminal region of the ectodomain. The formation of this structure appears to drive apposition and subsequent fusion of viral and target cell membranes. Acts as a viral fusion peptide which is unmasked following S2 cleavage occurring upon virus endocytosis. The polypeptide is Spike glycoprotein (Murine coronavirus (strain 4) (MHV-4)).